The chain runs to 433 residues: Adenylosuccinate synthetase (433 aa).

GTP is bound by residues 18–24 (GDEGKGK) and 46–48 (GHT). Asp19 acts as the Proton acceptor in catalysis. Positions 19 and 46 each coordinate Mg(2+). Residues 19–22 (DEGK), 44–47 (NAGH), Thr136, Arg150, Gln229, Thr244, and Arg308 contribute to the IMP site. The active-site Proton donor is His47. Residue 304 to 310 (VTTKRMR) coordinates substrate. Residues Arg310, 336–338 (KID), and 420–422 (GTG) contribute to the GTP site.

This sequence belongs to the adenylosuccinate synthetase family. In terms of assembly, homodimer. The cofactor is Mg(2+).

It is found in the cytoplasm. It catalyses the reaction IMP + L-aspartate + GTP = N(6)-(1,2-dicarboxyethyl)-AMP + GDP + phosphate + 2 H(+). It functions in the pathway purine metabolism; AMP biosynthesis via de novo pathway; AMP from IMP: step 1/2. In terms of biological role, plays an important role in the de novo pathway and in the salvage pathway of purine nucleotide biosynthesis. Catalyzes the first committed step in the biosynthesis of AMP from IMP. The chain is Adenylosuccinate synthetase from Schistosoma japonicum (Blood fluke).